The following is a 557-amino-acid chain: D-arabinono-1,4-lactone oxidase (557 aa).

In terms of domain architecture, FAD-binding PCMH-type spans 26-209 (FFCKPQAIFQ…THVTLRTIPK (184 aa)). His-63 is modified (pros-8alpha-FAD histidine).

The protein belongs to the oxygen-dependent FAD-linked oxidoreductase family. Requires FAD as cofactor.

The protein resides in the mitochondrion membrane. The enzyme catalyses D-arabinono-1,4-lactone + O2 = dehydro-D-arabinono-1,4-lactone + H2O2 + H(+). The protein operates within cofactor biosynthesis; D-erythroascorbate biosynthesis; dehydro-D-arabinono-1,4-lactone from D-arabinose: step 2/2. The protein is D-arabinono-1,4-lactone oxidase (ALO1) of Debaryomyces hansenii (strain ATCC 36239 / CBS 767 / BCRC 21394 / JCM 1990 / NBRC 0083 / IGC 2968) (Yeast).